Here is a 267-residue protein sequence, read N- to C-terminus: 3-methyl-2-oxobutanoate hydroxymethyltransferase (267 aa).

Asp46 and Asp85 together coordinate Mg(2+). 3-methyl-2-oxobutanoate-binding positions include 46–47, Asp85, and Lys115; that span reads DS. Glu117 provides a ligand contact to Mg(2+). The active-site Proton acceptor is Glu184.

Belongs to the PanB family. As to quaternary structure, homodecamer; pentamer of dimers. It depends on Mg(2+) as a cofactor.

The protein resides in the cytoplasm. It carries out the reaction 3-methyl-2-oxobutanoate + (6R)-5,10-methylene-5,6,7,8-tetrahydrofolate + H2O = 2-dehydropantoate + (6S)-5,6,7,8-tetrahydrofolate. The protein operates within cofactor biosynthesis; (R)-pantothenate biosynthesis; (R)-pantoate from 3-methyl-2-oxobutanoate: step 1/2. Functionally, catalyzes the reversible reaction in which hydroxymethyl group from 5,10-methylenetetrahydrofolate is transferred onto alpha-ketoisovalerate to form ketopantoate. This Geotalea daltonii (strain DSM 22248 / JCM 15807 / FRC-32) (Geobacter daltonii) protein is 3-methyl-2-oxobutanoate hydroxymethyltransferase.